A 125-amino-acid polypeptide reads, in one-letter code: Inner membrane protein YbaN (125 aa).

The Cytoplasmic portion of the chain corresponds to 1–6 (MQRIIL). A helical transmembrane segment spans residues 7–26 (IIIGWLAVVLGTLGVVLPVL). The Periplasmic portion of the chain corresponds to 27-45 (PTTPFILLAAWCFARSSPR). Residues 46-63 (FHAWLLYRSWFGSYLRFW) form a helical membrane-spanning segment. Residues 64-74 (QKHHAMPRGVK) are Cytoplasmic-facing. The chain crosses the membrane as a helical span at residues 75 to 92 (PRAILLILLTFAISLWFV). The Periplasmic portion of the chain corresponds to 93 to 95 (QMP). Residues 96–118 (WVRIMLLVILACLLFYMWRIPVI) form a helical membrane-spanning segment. At 119–125 (DEKQEKH) the chain is on the cytoplasmic side.

The protein localises to the cell inner membrane. The polypeptide is Inner membrane protein YbaN (ybaN) (Escherichia coli O157:H7).